A 156-amino-acid polypeptide reads, in one-letter code: Small ribosomal subunit protein uS7 (156 aa).

This sequence belongs to the universal ribosomal protein uS7 family. In terms of assembly, part of the 30S ribosomal subunit. Contacts proteins S9 and S11.

In terms of biological role, one of the primary rRNA binding proteins, it binds directly to 16S rRNA where it nucleates assembly of the head domain of the 30S subunit. Is located at the subunit interface close to the decoding center, probably blocks exit of the E-site tRNA. In Rippkaea orientalis (strain PCC 8801 / RF-1) (Cyanothece sp. (strain PCC 8801)), this protein is Small ribosomal subunit protein uS7.